Here is a 137-residue protein sequence, read N- to C-terminus: Putative pre-16S rRNA nuclease (137 aa).

It belongs to the YqgF nuclease family.

It localises to the cytoplasm. In terms of biological role, could be a nuclease involved in processing of the 5'-end of pre-16S rRNA. The protein is Putative pre-16S rRNA nuclease of Desulforamulus reducens (strain ATCC BAA-1160 / DSM 100696 / MI-1) (Desulfotomaculum reducens).